A 304-amino-acid polypeptide reads, in one-letter code: UDP-3-O-acyl-N-acetylglucosamine deacetylase (304 aa).

The Zn(2+) site is built by His-78, His-237, and Asp-241. The active-site Proton donor is His-264.

This sequence belongs to the LpxC family. The cofactor is Zn(2+).

It catalyses the reaction a UDP-3-O-[(3R)-3-hydroxyacyl]-N-acetyl-alpha-D-glucosamine + H2O = a UDP-3-O-[(3R)-3-hydroxyacyl]-alpha-D-glucosamine + acetate. It participates in glycolipid biosynthesis; lipid IV(A) biosynthesis; lipid IV(A) from (3R)-3-hydroxytetradecanoyl-[acyl-carrier-protein] and UDP-N-acetyl-alpha-D-glucosamine: step 2/6. Its function is as follows. Catalyzes the hydrolysis of UDP-3-O-myristoyl-N-acetylglucosamine to form UDP-3-O-myristoylglucosamine and acetate, the committed step in lipid A biosynthesis. This chain is UDP-3-O-acyl-N-acetylglucosamine deacetylase, found in Methylococcus capsulatus (strain ATCC 33009 / NCIMB 11132 / Bath).